We begin with the raw amino-acid sequence, 36 residues long: U-limacoditoxin(7)-Dv63 (36 aa).

The signal sequence occupies residues 1–19 (MFKPRVILLITIIAVFSEF).

Belongs to the limacoditoxin-7 family. In terms of tissue distribution, expressed by the venom secretory cell of the spine. The spine is a cuticular structure containing a single large nucleated venom-secreting cell at its base. It is an independent unit capable of producing, storing and injecting venom. On the back of D.vulnerans caterpillars, spines are grouped together by 50 to 100 to form scoli, of which there are eight in D.vulnerans.

It localises to the secreted. In terms of biological role, peptide with insecticidal and antiparasitic activities. Induces irreversible paralysis in D.melanogaster when tested at high doses. It shows a moderate antiparasitic activity against the major pathogenic nematode of ruminants (H.contortus, EC(50)=41.3 uM). Does not show antimicrobial activities. Does not induce increase in intracellular calcium in mouse DRG neurons, suggesting that it does not induce pain. The protein is U-limacoditoxin(7)-Dv63 of Doratifera vulnerans (Mottled cup moth).